The chain runs to 37 residues: Mu-agatoxin-Aa1d (37 aa).

Disulfide bonds link cysteine 2–cysteine 18, cysteine 9–cysteine 23, cysteine 17–cysteine 33, and cysteine 25–cysteine 31. At asparagine 37 the chain carries Asparagine amide.

It belongs to the neurotoxin 07 (Beta/delta-agtx) family. 03 (aga-4) subfamily. Aga sub-subfamily. In terms of tissue distribution, expressed by the venom gland.

It is found in the secreted. Its function is as follows. Insecticidal neurotoxin that induces an irreversible spastic paralysis when injected into insects. Modifies presynaptic voltage-gated sodium channels (Nav), causing them to open at the normal resting potential of the nerve. This leads to spontaneous release of neurotransmitter and repetitive action potentials in motor neurons. In Agelenopsis aperta (North American funnel-web spider), this protein is Mu-agatoxin-Aa1d.